The sequence spans 395 residues: Elongation factor Tu (395 aa).

The tr-type G domain maps to 10 to 204; that stretch reads KPHVNIGTIG…AVDSYIPTPQ (195 aa). Residues 19 to 26 are G1; sequence GHVDHGKT. 19-26 contacts GTP; that stretch reads GHVDHGKT. Residue Thr26 participates in Mg(2+) binding. Positions 60-64 are G2; it reads GITIN. The segment at 81–84 is G3; the sequence is DCPG. Residues 81-85 and 136-139 each bind GTP; these read DCPGH and NKCD. The G4 stretch occupies residues 136-139; the sequence is NKCD. Positions 174-176 are G5; that stretch reads SAL.

It belongs to the TRAFAC class translation factor GTPase superfamily. Classic translation factor GTPase family. EF-Tu/EF-1A subfamily. In terms of assembly, monomer.

It localises to the cytoplasm. The enzyme catalyses GTP + H2O = GDP + phosphate + H(+). GTP hydrolase that promotes the GTP-dependent binding of aminoacyl-tRNA to the A-site of ribosomes during protein biosynthesis. The sequence is that of Elongation factor Tu from Symbiobacterium thermophilum (strain DSM 24528 / JCM 14929 / IAM 14863 / T).